Reading from the N-terminus, the 309-residue chain is Glutaminase 2 (309 aa).

Substrate is bound by residues serine 65, asparagine 117, glutamate 162, asparagine 169, tyrosine 193, tyrosine 245, and valine 263.

The protein belongs to the glutaminase family. In terms of assembly, homotetramer.

The enzyme catalyses L-glutamine + H2O = L-glutamate + NH4(+). The protein is Glutaminase 2 of Bacillus subtilis (strain 168).